The sequence spans 767 residues: Polyribonucleotide nucleotidyltransferase (767 aa).

Residues Asp509 and Asp515 each coordinate Mg(2+). One can recognise a KH domain in the interval 575–634; sequence PRILTVKVPIDKIGEVIGPKGKMINSIQDETGAEITIEDDGTIYIGATDGPSAEAARDAI. One can recognise an S1 motif domain in the interval 646 to 718; that stretch reads GERYLGTVVK…ERGKLSLVPV (73 aa). The interval 725–767 is disordered; that stretch reads AVAAPNGGESPNGAKKTDASGNGAKQPRRRRRTRSSSRSSENT. A compositionally biased stretch (basic residues) spans 750–759; that stretch reads QPRRRRRTRS.

This sequence belongs to the polyribonucleotide nucleotidyltransferase family. Mg(2+) serves as cofactor.

The protein localises to the cytoplasm. The catalysed reaction is RNA(n+1) + phosphate = RNA(n) + a ribonucleoside 5'-diphosphate. Functionally, involved in mRNA degradation. Catalyzes the phosphorolysis of single-stranded polyribonucleotides processively in the 3'- to 5'-direction. The polypeptide is Polyribonucleotide nucleotidyltransferase (Thermobifida fusca (strain YX)).